We begin with the raw amino-acid sequence, 140 residues long: NADPH-dependent 7-cyano-7-deazaguanine reductase (140 aa).

Cysteine 51 serves as the catalytic Thioimide intermediate. Residue aspartate 58 is the Proton donor of the active site. Residues leucine 73–serine 75 and histidine 92–glutamate 93 each bind substrate.

The protein belongs to the GTP cyclohydrolase I family. QueF type 1 subfamily.

The protein localises to the cytoplasm. It catalyses the reaction 7-aminomethyl-7-carbaguanine + 2 NADP(+) = 7-cyano-7-deazaguanine + 2 NADPH + 3 H(+). It participates in tRNA modification; tRNA-queuosine biosynthesis. Its function is as follows. Catalyzes the NADPH-dependent reduction of 7-cyano-7-deazaguanine (preQ0) to 7-aminomethyl-7-deazaguanine (preQ1). This Syntrophus aciditrophicus (strain SB) protein is NADPH-dependent 7-cyano-7-deazaguanine reductase.